The sequence spans 458 residues: Alpha-glucosides-binding periplasmic protein AglE (458 aa).

A signal peptide spans 1 to 27 (MKRSLLIGVAAFALLAGTAGLAGTAGA).

It belongs to the bacterial solute-binding protein 1 family.

The protein localises to the periplasm. In terms of biological role, part of the binding-protein-dependent transport system for alpha-glucosides such as sucrose, maltose and trehalose. The protein is Alpha-glucosides-binding periplasmic protein AglE (aglE) of Rhizobium meliloti (strain 1021) (Ensifer meliloti).